The sequence spans 356 residues: GDSL esterase/lipase At2g36325 (356 aa).

An N-terminal signal peptide occupies residues 1 to 26 (MNITKLTPWFLFSCLILLSDYIKVNS). Asn25 is a glycosylation site (N-linked (GlcNAc...) asparagine). Catalysis depends on Ser54, which acts as the Nucleophile. 3 N-linked (GlcNAc...) asparagine glycosylation sites follow: Asn165, Asn185, and Asn240. Catalysis depends on residues Asp334 and His337.

This sequence belongs to the 'GDSL' lipolytic enzyme family.

It is found in the secreted. The polypeptide is GDSL esterase/lipase At2g36325 (Arabidopsis thaliana (Mouse-ear cress)).